Consider the following 150-residue polypeptide: MKNKNLFPMLSVSEVNELLKQEEIFNFIGIEFEKLEKGYSRLKFNFNEKLTRIGGILHGGVVFSAVDYAGSYAVRTLDKVKDGVTAELKINFLKPMKEGPFTVEPRVISEGKRLVVVDISAYDGNSNLCAKALGTWVVYRETNSETQLSS.

Belongs to the thioesterase PaaI family.

This chain is Putative esterase SSO1253, found in Saccharolobus solfataricus (strain ATCC 35092 / DSM 1617 / JCM 11322 / P2) (Sulfolobus solfataricus).